The chain runs to 229 residues: Germin-like protein 2-4 (229 aa).

Residues Met1 to Gly23 form the signal peptide. A disulfide bridge links Cys32 with Cys52. N-linked (GlcNAc...) asparagine glycosylation is present at Asn57. The 148-residue stretch at Ser66 to Arg213 folds into the Cupin type-1 domain. Residues His115, His117, Glu122, and His161 each coordinate Mn(2+).

Belongs to the germin family. Oligomer (believed to be a pentamer but probably hexamer).

The protein resides in the secreted. It is found in the extracellular space. The protein localises to the apoplast. May play a role in plant defense. Probably has no oxalate oxidase activity even if the active site is conserved. This Oryza sativa subsp. japonica (Rice) protein is Germin-like protein 2-4.